The chain runs to 125 residues: Ribosome-binding factor A (125 aa).

It belongs to the RbfA family. Monomer. Binds 30S ribosomal subunits, but not 50S ribosomal subunits or 70S ribosomes.

It is found in the cytoplasm. One of several proteins that assist in the late maturation steps of the functional core of the 30S ribosomal subunit. Associates with free 30S ribosomal subunits (but not with 30S subunits that are part of 70S ribosomes or polysomes). Required for efficient processing of 16S rRNA. May interact with the 5'-terminal helix region of 16S rRNA. The protein is Ribosome-binding factor A of Carboxydothermus hydrogenoformans (strain ATCC BAA-161 / DSM 6008 / Z-2901).